We begin with the raw amino-acid sequence, 160 residues long: Phosphopantetheine adenylyltransferase (160 aa).

Serine 9 provides a ligand contact to substrate. ATP contacts are provided by residues 9 to 10 (SF) and histidine 17. Substrate contacts are provided by lysine 41, valine 73, and lysine 87. Residues 88–90 (GLR), glutamate 98, and 122–128 (YSFVSSS) contribute to the ATP site.

It belongs to the bacterial CoaD family. As to quaternary structure, homohexamer. The cofactor is Mg(2+).

The protein localises to the cytoplasm. The enzyme catalyses (R)-4'-phosphopantetheine + ATP + H(+) = 3'-dephospho-CoA + diphosphate. Its pathway is cofactor biosynthesis; coenzyme A biosynthesis; CoA from (R)-pantothenate: step 4/5. Its function is as follows. Reversibly transfers an adenylyl group from ATP to 4'-phosphopantetheine, yielding dephospho-CoA (dPCoA) and pyrophosphate. The sequence is that of Phosphopantetheine adenylyltransferase from Mycobacterium leprae (strain TN).